A 184-amino-acid chain; its full sequence is Outer-membrane lipoprotein carrier protein (184 aa).

The signal sequence occupies residues 1-19 (MKAFLKILMVLIFVSVAYA).

This sequence belongs to the LolA family. In terms of assembly, monomer.

Its subcellular location is the periplasm. Its function is as follows. Participates in the translocation of lipoproteins from the inner membrane to the outer membrane. Only forms a complex with a lipoprotein if the residue after the N-terminal Cys is not an aspartate (The Asp acts as a targeting signal to indicate that the lipoprotein should stay in the inner membrane). The chain is Outer-membrane lipoprotein carrier protein from Helicobacter pylori (strain P12).